We begin with the raw amino-acid sequence, 130 residues long: Small ribosomal subunit protein uS9 (130 aa).

This sequence belongs to the universal ribosomal protein uS9 family.

In Xanthomonas oryzae pv. oryzae (strain MAFF 311018), this protein is Small ribosomal subunit protein uS9.